The chain runs to 1027 residues: INO80 complex subunit D (1027 aa).

Residue Lys87 forms a Glycyl lysine isopeptide (Lys-Gly) (interchain with G-Cter in SUMO2) linkage. Residue Ser132 is modified to Phosphoserine. 5 disordered regions span residues 193–278, 519–574, 813–850, 914–969, and 982–1027; these read HFSP…VDPP, RGDN…LSMP, RQQY…HTTS, LSTS…TSPK, and QLSS…PSPN. Residues 201 to 216 show a composition bias toward low complexity; that stretch reads SQQQPPQQHSHLSPLS. The span at 229 to 257 shows a compositional bias: polar residues; sequence VCKSPQPQNTSLPMQGVAPTTHTIAQARQ. Positions 525 to 559 are enriched in basic residues; that stretch reads KVQHQQQRKPRKKTKPPALTKKHKKKRRRGPRRPQ. The segment covering 914–932 has biased composition (low complexity); that stretch reads LSTSLSTPPTTSNSETTQP. Polar residues predominate over residues 937-954; the sequence is VTPSSSSVLPGLPQTSFS. The span at 1001–1027 shows a compositional bias: low complexity; the sequence is APPTGFTVTGATATSTNNASSPFPSPN.

This sequence belongs to the INO80D family. As to quaternary structure, component of the chromatin remodeling INO80 complex; specifically part of a complex module associated with the N-terminus of INO80.

Its subcellular location is the nucleus. Its function is as follows. Putative regulatory component of the chromatin remodeling INO80 complex which is involved in transcriptional regulation, DNA replication and probably DNA repair. The polypeptide is INO80 complex subunit D (Homo sapiens (Human)).